We begin with the raw amino-acid sequence, 53 residues long: uncharacterized protein (53 aa).

The chain crosses the membrane as a helical span at residues 18–38 (FLFFIFYFLFFFIFFTVFGNL).

It is found in the membrane. This is an uncharacterized protein from Dictyostelium discoideum (Social amoeba).